A 431-amino-acid polypeptide reads, in one-letter code: 3'3'-cGAMP-specific phosphodiesterase 1 (431 aa).

In terms of domain architecture, HD spans 39-155 (DINHGHRVGY…IFLADRVDYL (117 aa)). In terms of domain architecture, HD-GYP spans 231 to 427 (GVEEIMSIAM…YYQLSIAESP (197 aa)). A divalent metal cation contacts are provided by histidine 288 and aspartate 289. Catalysis depends on lysine 292, which acts as the Proton donor. The a divalent metal cation site is built by histidine 317, histidine 341, histidine 342, and aspartate 370.

Monomer. It depends on Ca(2+) as a cofactor. Mg(2+) is required as a cofactor.

It catalyses the reaction 3',3'-cGAMP + H2O = 5'-pApG-3' + H(+). The catalysed reaction is 5'-pApG-3' + H2O = 5'-ApG-3' + phosphate. Phosphodiesterase (PDE) that catalyzes the hydrolysis of 3'3'-cyclic GMP-AMP (3'3'-cGAMP), leading to linear 5'-pApG. Also displays 5'-nucleotidase activity, further hydrolyzing 5'-pApG to 5'-ApG. Counteracts the function of the 3'3'-cGAMP synthase DncV, and is involved in the modulation of intracellular 3'3'-cGAMP levels. Enhances bacterial chemotaxis and inhibits intestinal colonization in vivo. Thus exerts a crucial role in regulating bacterial infectivity through catalyzing 3'3'-cGAMP degradation. Is specific for 3'3'-cGAMP since it cannot degrade other cGAMP linkage isomers (3'2'-, 2'3'-, and 2'2'-cGAMPs). Is also able to hydrolyze c-di-GMP but not c-di-AMP. The chain is 3'3'-cGAMP-specific phosphodiesterase 1 from Vibrio cholerae serotype O1 (strain ATCC 39315 / El Tor Inaba N16961).